The primary structure comprises 54 residues: Large ribosomal subunit protein eL37 (54 aa).

Zn(2+) is bound by residues cysteine 20, cysteine 23, cysteine 35, and cysteine 38. Residues 20-38 form a C4-type zinc finger; the sequence is CRRCGHHTYNVRTKRCSHC.

This sequence belongs to the eukaryotic ribosomal protein eL37 family. Zn(2+) is required as a cofactor.

Functionally, binds to the 23S rRNA. The protein is Large ribosomal subunit protein eL37 (rpl37e) of Thermoplasma volcanium (strain ATCC 51530 / DSM 4299 / JCM 9571 / NBRC 15438 / GSS1).